Consider the following 855-residue polypeptide: Envelope glycoprotein gp150 (855 aa).

Residues 1-784 (MAEGGFTHNQ…WIGKIPQYLK (784 aa)) lie on the Extracellular side of the membrane. N-linked (GlcNAc...) asparagine; by host glycans are attached at residues asparagine 135, asparagine 220, asparagine 258, asparagine 269, asparagine 274, asparagine 298, asparagine 330, asparagine 336, asparagine 342, asparagine 372, asparagine 418, asparagine 422, asparagine 448, asparagine 469, asparagine 481, asparagine 499, asparagine 518, asparagine 531, asparagine 548, and asparagine 551. Residues 615–635 (IMLALATVLSMAGAGTGATAI) form a fusion peptide region. Positions 642–692 (HQVLATHQQALEKITEALKINNLRLITLEHQVLVIGLRVEAIEKFLYTAFA) form a coiled coil. Positions 661–679 (INNLRLITLEHQVLVIGLR) are immunosuppression. Residues asparagine 716, asparagine 720, asparagine 728, and asparagine 736 are each glycosylated (N-linked (GlcNAc...) asparagine; by host). Residues 735 to 771 (YNQTRDLQNKFYEIIMDIEQNNVQGKTGIQQLQKWEN) are a coiled coil. Residues 785–805 (GLLGSVLGIGLGILLLLICLP) traverse the membrane as a helical segment. The Cytoplasmic segment spans residues 806–855 (TLVDCIRNCTNKILGYTVIAMPEIDDEEVHLSVELRRNGRQCGISEKEEE).

In terms of assembly, the mature envelope protein (Env) consists of a trimer of SU-TM heterodimers attached by noncovalent interactions or by a labile interchain disulfide bond. Specific enzymatic cleavages in vivo yield mature proteins. Envelope glycoproteins are synthesized as an inactive precursor that is N-glycosylated and processed likely by host cell furin or by a furin-like protease in the Golgi to yield the mature SU and TM proteins. The cleavage site between SU and TM requires the minimal sequence [KR]-X-[KR]-R.

It is found in the virion membrane. The protein resides in the host cell membrane. Functionally, the surface protein (SU) attaches the virus to the host cell by binding to its receptor. This interaction triggers the refolding of the transmembrane protein (TM) and is thought to activate its fusogenic potential by unmasking its fusion peptide. Fusion occurs at the host cell plasma membrane. In terms of biological role, the transmembrane protein (TM) acts as a class I viral fusion protein. Under the current model, the protein has at least 3 conformational states: pre-fusion native state, pre-hairpin intermediate state, and post-fusion hairpin state. During viral and target cell membrane fusion, the coiled coil regions (heptad repeats) assume a trimer-of-hairpins structure, positioning the fusion peptide in close proximity to the C-terminal region of the ectodomain. The formation of this structure appears to drive apposition and subsequent fusion of viral and target cell membranes. Membranes fusion leads to delivery of the nucleocapsid into the cytoplasm. This is Envelope glycoprotein gp150 (env) from Feline immunodeficiency virus (isolate TM2) (FIV).